Reading from the N-terminus, the 199-residue chain is Transgelin-2 (199 aa).

Ala-2 is subject to N-acetylalanine. The residue at position 11 (Ser-11) is a Phosphoserine. An N6-acetyllysine mark is found at Lys-17 and Lys-20. The Calponin-homology (CH) domain maps to 24 to 136 (ADLEQILIQW…RTLMNLGGLA (113 aa)). A Phosphoserine modification is found at Ser-163. Residue Lys-171 forms a Glycyl lysine isopeptide (Lys-Gly) (interchain with G-Cter in SUMO2) linkage. A Calponin-like repeat occupies 174 to 199 (IGLQMGTNRGASQAGMTGYGMPRQIL). At Thr-180 the chain carries Phosphothreonine. 2 positions are modified to omega-N-methylarginine: Arg-182 and Arg-196.

The protein belongs to the calponin family.

This Mus musculus (Mouse) protein is Transgelin-2 (Tagln2).